The following is a 193-amino-acid chain: 7-methyl-GTP pyrophosphatase (193 aa).

Aspartate 68 serves as the catalytic Proton acceptor.

It belongs to the Maf family. YceF subfamily. It depends on a divalent metal cation as a cofactor.

It is found in the cytoplasm. It catalyses the reaction N(7)-methyl-GTP + H2O = N(7)-methyl-GMP + diphosphate + H(+). In terms of biological role, nucleoside triphosphate pyrophosphatase that hydrolyzes 7-methyl-GTP (m(7)GTP). May have a dual role in cell division arrest and in preventing the incorporation of modified nucleotides into cellular nucleic acids. The sequence is that of 7-methyl-GTP pyrophosphatase from Chromobacterium violaceum (strain ATCC 12472 / DSM 30191 / JCM 1249 / CCUG 213 / NBRC 12614 / NCIMB 9131 / NCTC 9757 / MK).